Here is a 177-residue protein sequence, read N- to C-terminus: Large ribosomal subunit protein uL6 (177 aa).

It belongs to the universal ribosomal protein uL6 family. Part of the 50S ribosomal subunit.

In terms of biological role, this protein binds to the 23S rRNA, and is important in its secondary structure. It is located near the subunit interface in the base of the L7/L12 stalk, and near the tRNA binding site of the peptidyltransferase center. The protein is Large ribosomal subunit protein uL6 of Nitrosospira multiformis (strain ATCC 25196 / NCIMB 11849 / C 71).